Here is a 420-residue protein sequence, read N- to C-terminus: Putative U-box domain-containing protein 58 (420 aa).

One can recognise an MIF4G domain in the interval N4–D168. Residues S139 to Q352 are a coiled coil. The U-box domain maps to Q352 to V420.

It carries out the reaction S-ubiquitinyl-[E2 ubiquitin-conjugating enzyme]-L-cysteine + [acceptor protein]-L-lysine = [E2 ubiquitin-conjugating enzyme]-L-cysteine + N(6)-ubiquitinyl-[acceptor protein]-L-lysine.. Its pathway is protein modification; protein ubiquitination. Functions as an E3 ubiquitin ligase. This chain is Putative U-box domain-containing protein 58 (PUB58), found in Arabidopsis thaliana (Mouse-ear cress).